Here is a 177-residue protein sequence, read N- to C-terminus: Large ribosomal subunit protein uL6 (177 aa).

This sequence belongs to the universal ribosomal protein uL6 family. As to quaternary structure, part of the 50S ribosomal subunit.

In terms of biological role, this protein binds to the 23S rRNA, and is important in its secondary structure. It is located near the subunit interface in the base of the L7/L12 stalk, and near the tRNA binding site of the peptidyltransferase center. This Alkalilimnicola ehrlichii (strain ATCC BAA-1101 / DSM 17681 / MLHE-1) protein is Large ribosomal subunit protein uL6.